Here is a 298-residue protein sequence, read N- to C-terminus: DegV domain-containing protein UU535 (298 aa).

Residues 5–287 form the DegV domain; that stretch reads FLIMTDSSTT…KGALGIQVIA (283 aa). Residues S65 and S96 each contribute to the hexadecanoate site.

May bind long-chain fatty acids, such as palmitate, and may play a role in lipid transport or fatty acid metabolism. This chain is DegV domain-containing protein UU535, found in Ureaplasma parvum serovar 3 (strain ATCC 700970).